Consider the following 427-residue polypeptide: 3-phosphoshikimate 1-carboxyvinyltransferase (427 aa).

Residues Lys-20, Ser-21, and Arg-25 each contribute to the 3-phosphoshikimate site. A phosphoenolpyruvate-binding site is contributed by Lys-20. Phosphoenolpyruvate-binding residues include Gly-92 and Arg-120. Positions 166, 168, 312, and 339 each coordinate 3-phosphoshikimate. Gln-168 contacts phosphoenolpyruvate. Asp-312 (proton acceptor) is an active-site residue. Phosphoenolpyruvate-binding residues include Arg-343 and Arg-385.

The protein belongs to the EPSP synthase family. As to quaternary structure, monomer.

The protein localises to the cytoplasm. It carries out the reaction 3-phosphoshikimate + phosphoenolpyruvate = 5-O-(1-carboxyvinyl)-3-phosphoshikimate + phosphate. The protein operates within metabolic intermediate biosynthesis; chorismate biosynthesis; chorismate from D-erythrose 4-phosphate and phosphoenolpyruvate: step 6/7. In terms of biological role, catalyzes the transfer of the enolpyruvyl moiety of phosphoenolpyruvate (PEP) to the 5-hydroxyl of shikimate-3-phosphate (S3P) to produce enolpyruvyl shikimate-3-phosphate and inorganic phosphate. This Streptococcus thermophilus (strain CNRZ 1066) protein is 3-phosphoshikimate 1-carboxyvinyltransferase.